A 175-amino-acid chain; its full sequence is Regenerating islet-derived protein 3-beta (175 aa).

The signal sequence occupies residues 1 to 26; that stretch reads MLHRLAFPVMSWMLLSCLMLLSQVQG. The propeptide occupies 27-37; that stretch reads EDSPKKIPSAR. 3 disulfide bridges follow: cysteine 40/cysteine 51, cysteine 68/cysteine 171, and cysteine 146/cysteine 163. The 126-residue stretch at 47 to 172 folds into the C-type lectin domain; that stretch reads YGSYCYALFQ…CEVKLPYVCK (126 aa). Histidine 107 provides a ligand contact to Zn(2+). Residues 114 to 116 carry the EPN motif; it reads EPN. Glutamate 121 provides a ligand contact to Zn(2+).

As to quaternary structure, forms a hexameric membrane-permeabilizing oligomeric pore on membrane phospholipids. The hexamer is formed by three dimers related by helical symmetry. Forms filaments, filamentation traps pore complexes and limits damage to host cells. Interacts with EXTL3. Post-translationally, proteolytic processing by trypsin removes an inhibitory N-terminal propeptide and is essential for peptidoglycan binding and antibacterial activity. As to expression, constitutively expressed in intestine.

The protein localises to the secreted. With respect to regulation, lipopolysaccharide inhibits pore-forming activity, explaining why is bactericidal for Gram-positive but not Gram-negative bacteria. Its function is as follows. Bactericidal C-type lectin which acts against several intestinal Gram-positive bacteria and Gram-negative bacteria. Lacks antibacterial activity against S.typhimurium. May play a role in protection against infection with S.enteritidis by inhibiting its translocation from the gut lumen into intestinal tissues and further extraintestinal tissues. In terms of biological role, acts as a hormone in response to different stimuli. Secreted by different cell types to activate its receptor EXTL3 and induce cell specific signaling pathways. In pancreas, is able stimulate cell proliferation. The protein is Regenerating islet-derived protein 3-beta of Rattus norvegicus (Rat).